A 325-amino-acid polypeptide reads, in one-letter code: Terpene synthase 11 (325 aa).

Positions 97-102 (DDEYLE) match the DDxx(x)D/E motif motif. Positions 227–235 (NDIYSFVKE) match the NDxxSxxxD/E motif motif.

This sequence belongs to the terpene synthase family.

The catalysed reaction is (2E,6E)-farnesyl diphosphate = (E)-beta-farnesene + diphosphate. The enzyme catalyses (2E,6E)-farnesyl diphosphate = (3E,6E)-alpha-farnesene + diphosphate. It carries out the reaction geranylgeranyl diphosphate + H2O = (S)-(+)-nephthenol + diphosphate. In terms of biological role, terpene synthase that converts its substrate farnesyl diphosphate (FPP) into the sesquiterpenes (E)-beta-farnesene and (E,E)-alpha-farnesene. TPS11 also converts geranylgeranyl diphosphate (GGPP) into the diterpene (S)-nephthenol. The chain is Terpene synthase 11 from Dictyostelium purpureum (Slime mold).